Reading from the N-terminus, the 182-residue chain is Large ribosomal subunit protein uL5 (182 aa).

The protein belongs to the universal ribosomal protein uL5 family. Part of the 50S ribosomal subunit; part of the 5S rRNA/L5/L18/L25 subcomplex. Contacts the 5S rRNA and the P site tRNA. Forms a bridge to the 30S subunit in the 70S ribosome.

In terms of biological role, this is one of the proteins that bind and probably mediate the attachment of the 5S RNA into the large ribosomal subunit, where it forms part of the central protuberance. In the 70S ribosome it contacts protein S13 of the 30S subunit (bridge B1b), connecting the 2 subunits; this bridge is implicated in subunit movement. Contacts the P site tRNA; the 5S rRNA and some of its associated proteins might help stabilize positioning of ribosome-bound tRNAs. The protein is Large ribosomal subunit protein uL5 of Borrelia turicatae (strain 91E135).